The primary structure comprises 763 residues: DEK domain-containing chromatin-associated protein 3 (763 aa).

Disordered stretches follow at residues 1–324 (MGED…RERK) and 458–681 (TGDV…SDKV). Positions 11–20 (PTANKTTSLE) are enriched in polar residues. Composition is skewed to basic and acidic residues over residues 32–44 (AGGK…AKDE), 72–97 (SEVK…KDEG), 124–172 (TVMK…KANG), and 180–242 (DIKE…KVED). A coiled-coil region spans residues 60–96 (KDDEKAETEDKESEVKKNEDNAETQKMEEKVEVTKDE). A coiled-coil region spans residues 214–286 (GKEKEDKEEN…KEESKGSKKR (73 aa)). Residues 243–252 (EKEGSEDEND) are compositionally biased toward acidic residues. The segment covering 253–264 (NEKVESKDAKED) has biased composition (basic and acidic residues). Residues 265 to 277 (EKEETNDDKEDEK) are compositionally biased toward acidic residues. Residues 284–291 (KKRGKGTS) carry the Nuclear localization signal 1 motif. A compositionally biased stretch (basic and acidic residues) spans 295–311 (KVREKNKTEEVKKDAEP). A compositionally biased stretch (basic residues) spans 475 to 484 (KGAKRKRTPK). Residues 483-490 (PKKTSPTA) carry the Nuclear localization signal 2 motif. Residues 485–496 (KTSPTAGSSSSK) are compositionally biased toward low complexity. A coiled-coil region spans residues 513–551 (KKSLAHSDDESEEEKEEEEKQEEEKAEEKEEKKEEENEN). Residues 521 to 533 (DESEEEKEEEEKQ) are compositionally biased toward acidic residues. A compositionally biased stretch (basic and acidic residues) spans 534–547 (EEEKAEEKEEKKEE). A compositionally biased stretch (acidic residues) spans 557 to 578 (SEDEAPQPSESEEKDESEEHSE). 2 stretches are compositionally biased toward low complexity: residues 606–615 (AVVAAKSSPP) and 650–660 (PIKASPAPSKS). Positions 661 to 681 (ASKEKPVKRAGKGKDKPSDKV) are enriched in basic and acidic residues. The DEK-C domain occupies 676–731 (KPSDKVLKNAIVEILKRVDFSTATFTDILKELAKEFTEDLTPRKSSIKMIIQEELT). 2 DNA-binding regions span residues 694 to 708 (DFST…KELA) and 723 to 727 (KMIIQ). Residues 723–753 (KMIIQEELTKLADEEEEEEKKEEDSEKEEAG) adopt a coiled-coil conformation. The segment at 730 to 763 (LTKLADEEEEEEKKEEDSEKEEAGGSGGGEEVKA) is disordered. Positions 753–763 (GGSGGGEEVKA) are enriched in gly residues.

As to quaternary structure, found in a mRNA splicing-dependent exon junction complex (EJC). Binds specifically histones H3 and H4. Interacts with TOP1A, SCC3, At1g61730, At1g20940, At1g13930, DEK4, HDT1, NIT1, SHL, CYP19-1, GEBPL, HSP70-3, PDP2, PDP3, KIN2, RPL11A and PDS5A. In terms of tissue distribution, highly expressed in young seedlings.

The protein localises to the nucleus. The protein resides in the nucleolus. Its function is as follows. Chromatin-associated protein which contributes to the modulation of chromatin structure (such as super-helical structure of DNA) and function. Binds to chromatin of protein-coding genes throughout the genome to regulate nucleosome occupancy and chromatin accessibility, and to modulate the expression of target genes. Negative regulator of stress tolerance (e.g. high salt). This Arabidopsis thaliana (Mouse-ear cress) protein is DEK domain-containing chromatin-associated protein 3.